The chain runs to 224 residues: Biosynthetic peptidoglycan transglycosylase (224 aa).

Residues Val9–Trp29 traverse the membrane as a helical segment.

This sequence belongs to the glycosyltransferase 51 family.

The protein localises to the cell inner membrane. The enzyme catalyses [GlcNAc-(1-&gt;4)-Mur2Ac(oyl-L-Ala-gamma-D-Glu-L-Lys-D-Ala-D-Ala)](n)-di-trans,octa-cis-undecaprenyl diphosphate + beta-D-GlcNAc-(1-&gt;4)-Mur2Ac(oyl-L-Ala-gamma-D-Glu-L-Lys-D-Ala-D-Ala)-di-trans,octa-cis-undecaprenyl diphosphate = [GlcNAc-(1-&gt;4)-Mur2Ac(oyl-L-Ala-gamma-D-Glu-L-Lys-D-Ala-D-Ala)](n+1)-di-trans,octa-cis-undecaprenyl diphosphate + di-trans,octa-cis-undecaprenyl diphosphate + H(+). It participates in cell wall biogenesis; peptidoglycan biosynthesis. Functionally, peptidoglycan polymerase that catalyzes glycan chain elongation from lipid-linked precursors. This chain is Biosynthetic peptidoglycan transglycosylase, found in Acinetobacter baylyi (strain ATCC 33305 / BD413 / ADP1).